Reading from the N-terminus, the 132-residue chain is uncharacterized protein (132 aa).

A disordered region spans residues 39–93; it reads HPAGASEALGALPPPRQLVEKRRVSPPRRLDQSGRDGGAVAKCSLSRGLSPPGWT. The segment covering 56–72 has biased composition (basic and acidic residues); sequence LVEKRRVSPPRRLDQSG.

This is an uncharacterized protein from Homo sapiens (Human).